We begin with the raw amino-acid sequence, 211 residues long: Transcriptional regulatory protein RcsA (211 aa).

The 66-residue stretch at 135 to 200 folds into the HTH luxR-type domain; sequence LDVHPLTLSQ…VIYHVVRLTD (66 aa). The H-T-H motif DNA-binding region spans 159-178; the sequence is TIQISDKMQIKAKTVSSHKG.

This sequence belongs to the RcsA family.

Component of the Rcs signaling system, which controls transcription of numerous genes. Binds to DNA to regulate expression of genes. This chain is Transcriptional regulatory protein RcsA, found in Pantoea stewartii subsp. stewartii (Erwinia stewartii).